The sequence spans 501 residues: O-phosphoseryl-tRNA(Sec) selenium transferase (501 aa).

Positions 1–44 are tetramerization; the sequence is MNRESFAAGERLVSPAYVRQGCEARRSHEHLIRLLLEKGKCPEN. Phosphoserine is present on S14. R75 contributes to the pyridoxal 5'-phosphate binding site. The tract at residues 96-106 is phosphate loop (P-loop); sequence GRSGDISAVQP. Substrate is bound by residues R97, S98, and Q105. R271 is a tRNA binding site. K284 bears the N6-(pyridoxal phosphate)lysine mark. R313 provides a ligand contact to substrate. 2 residues coordinate tRNA: R398 and K463. Residues 474–493 are SLA/LP epitope; that stretch reads DKTEDVDIEEMALKLDNVLL.

The protein belongs to the SepSecS family. Homotetramer formed by a catalytic dimer and a non-catalytic dimer serving as a binding platform that orients tRNASec for catalysis. Each tetramer binds the CCA ends of two tRNAs which point to the active sites of the catalytic dimer. Requires pyridoxal 5'-phosphate as cofactor. As to expression, primarily expressed in liver, pancreas, kidney and lung. Overexpressed in PHA-stimulated T-cells.

Its subcellular location is the cytoplasm. The enzyme catalyses O-phospho-L-seryl-tRNA(Sec) + selenophosphate + H2O = L-selenocysteinyl-tRNA(Sec) + 2 phosphate. Its pathway is aminoacyl-tRNA biosynthesis; selenocysteinyl-tRNA(Sec) biosynthesis; selenocysteinyl-tRNA(Sec) from L-seryl-tRNA(Sec) (archaeal/eukaryal route): step 2/2. Its function is as follows. Converts O-phosphoseryl-tRNA(Sec) to selenocysteinyl-tRNA(Sec) required for selenoprotein biosynthesis. This is O-phosphoseryl-tRNA(Sec) selenium transferase (SEPSECS) from Homo sapiens (Human).